The following is a 752-amino-acid chain: Photosystem I P700 chlorophyll a apoprotein A1 (752 aa).

Transmembrane regions (helical) follow at residues 73-96, 159-182, 198-222, 294-312, 349-372, 388-414, 436-458, and 533-551; these read IFSA…FHGA, LYWI…FHYH, MNHH…HVAL, IAHH…GHMY, WHAQ…HHMY, LSLF…IFMV, SIIA…FYIH, and FMVH…LILL. Residues C575 and C584 each contribute to the [4Fe-4S] cluster site. Helical transmembrane passes span 591–612 and 666–688; these read HVFL…HFSW and ASAY…MFLF. Chlorophyll a' is bound at residue H677. M685 and Y693 together coordinate chlorophyll a. A phylloquinone-binding site is contributed by W694. The chain crosses the membrane as a helical span at residues 726 to 746; the sequence is AVGLAHYLLGGIGTTWAFFLA.

Belongs to the PsaA/PsaB family. As to quaternary structure, the PsaA/B heterodimer binds the P700 chlorophyll special pair and subsequent electron acceptors. PSI consists of a core antenna complex that captures photons, and an electron transfer chain that converts photonic excitation into a charge separation. The eukaryotic PSI reaction center is composed of at least 11 subunits. It depends on P700 is a chlorophyll a/chlorophyll a' dimer, A0 is one or more chlorophyll a, A1 is one or both phylloquinones and FX is a shared 4Fe-4S iron-sulfur center. as a cofactor.

It is found in the plastid. The protein resides in the chloroplast thylakoid membrane. The catalysed reaction is reduced [plastocyanin] + hnu + oxidized [2Fe-2S]-[ferredoxin] = oxidized [plastocyanin] + reduced [2Fe-2S]-[ferredoxin]. PsaA and PsaB bind P700, the primary electron donor of photosystem I (PSI), as well as the electron acceptors A0, A1 and FX. PSI is a plastocyanin/cytochrome c6-ferredoxin oxidoreductase, converting photonic excitation into a charge separation, which transfers an electron from the donor P700 chlorophyll pair to the spectroscopically characterized acceptors A0, A1, FX, FA and FB in turn. Oxidized P700 is reduced on the lumenal side of the thylakoid membrane by plastocyanin or cytochrome c6. The chain is Photosystem I P700 chlorophyll a apoprotein A1 from Phaeodactylum tricornutum (strain CCAP 1055/1).